The sequence spans 226 residues: DNA mismatch repair protein MutH (226 aa).

It belongs to the MutH family.

The protein resides in the cytoplasm. Sequence-specific endonuclease that cleaves unmethylated GATC sequences. It is involved in DNA mismatch repair. The chain is DNA mismatch repair protein MutH from Actinobacillus pleuropneumoniae serotype 3 (strain JL03).